The chain runs to 126 residues: Protein ApaG (126 aa).

Residues 2–126 form the ApaG domain; sequence SDPRYQIDVS…FRLAVPGALH (125 aa).

This Pseudomonas putida (strain ATCC 700007 / DSM 6899 / JCM 31910 / BCRC 17059 / LMG 24140 / F1) protein is Protein ApaG.